A 360-amino-acid chain; its full sequence is GTP 3',8-cyclase (360 aa).

The Radical SAM core domain maps to 33–251; that stretch reads RFGRSATDLR…LQPHFRLRPD (219 aa). Residue arginine 42 participates in GTP binding. [4Fe-4S] cluster-binding residues include cysteine 49 and cysteine 53. Tyrosine 55 is an S-adenosyl-L-methionine binding site. Position 56 (cysteine 56) interacts with [4Fe-4S] cluster. Arginine 93 contacts GTP. Glycine 97 is an S-adenosyl-L-methionine binding site. Residue threonine 124 coordinates GTP. Serine 148 is a binding site for S-adenosyl-L-methionine. A GTP-binding site is contributed by lysine 185. Residue methionine 219 participates in S-adenosyl-L-methionine binding. [4Fe-4S] cluster is bound by residues cysteine 287 and cysteine 290. 292-294 is a binding site for GTP; that stretch reads RTR. Cysteine 304 serves as a coordination point for [4Fe-4S] cluster.

This sequence belongs to the radical SAM superfamily. MoaA family. As to quaternary structure, monomer and homodimer. [4Fe-4S] cluster is required as a cofactor.

It carries out the reaction GTP + AH2 + S-adenosyl-L-methionine = (8S)-3',8-cyclo-7,8-dihydroguanosine 5'-triphosphate + 5'-deoxyadenosine + L-methionine + A + H(+). It participates in cofactor biosynthesis; molybdopterin biosynthesis. Its function is as follows. Catalyzes the cyclization of GTP to (8S)-3',8-cyclo-7,8-dihydroguanosine 5'-triphosphate. This Mycobacterium marinum (strain ATCC BAA-535 / M) protein is GTP 3',8-cyclase.